The sequence spans 356 residues: Ubiquitin-conjugating enzyme E2 variant 3 (356 aa).

The segment at 1 to 83 (MSDQPGTSRP…LEDLHNYHRE (83 aa)) is disordered. The span at 18–32 (PTKTATRRRARPIAI) shows a compositional bias: polar residues. Positions 63–76 (QPRKTVPKNVPLED) are enriched in basic and acidic residues. The 156-residue stretch at 169–324 (DIITEFMNRS…AREFVMKMAG (156 aa)) folds into the UBC core domain.

The protein belongs to the ubiquitin-conjugating enzyme family. In terms of assembly, may interact with pmk-3. As to expression, expressed ubiquitously.

Its subcellular location is the nucleus. It is found in the cytoplasm. It localises to the cell projection. The protein resides in the dendrite. The protein localises to the axon. Its subcellular location is the cilium. Possible negative regulator of polyubiquitination. May modulate the activity of the p38 MAP kinase pnk-3. May have a role in axon termination and synaptic transmission at motor and mechanosensory neurons. Plays a role in intraflagellar transport in cilia and cilium length regulation. In Caenorhabditis elegans, this protein is Ubiquitin-conjugating enzyme E2 variant 3.